The chain runs to 416 residues: Phosphoglycerate kinase (416 aa).

Residues 28–30 (DMN), arginine 44, 65–68 (HQSR), arginine 122, and arginine 162 each bind substrate. Residues glutamate 337 and 362-365 (GGHI) each bind ATP.

The protein belongs to the phosphoglycerate kinase family. As to quaternary structure, monomer.

The protein resides in the cytoplasm. It catalyses the reaction (2R)-3-phosphoglycerate + ATP = (2R)-3-phospho-glyceroyl phosphate + ADP. It participates in carbohydrate degradation; glycolysis; pyruvate from D-glyceraldehyde 3-phosphate: step 2/5. This chain is Phosphoglycerate kinase, found in Methanosarcina mazei (strain ATCC BAA-159 / DSM 3647 / Goe1 / Go1 / JCM 11833 / OCM 88) (Methanosarcina frisia).